We begin with the raw amino-acid sequence, 132 residues long: Cytochrome B5 isoform C (132 aa).

The region spanning 2–78 (ANLISFHDVA…MKKYCIGDVD (77 aa)) is the Cytochrome b5 heme-binding domain. Positions 37 and 61 each coordinate heme. The chain crosses the membrane as a helical span at residues 110-129 (LLIYLIPLLILGVAFALRFY).

The protein belongs to the cytochrome b5 family. As to quaternary structure, interacts with CER1, BI-1, FAH1 and FAH2.

Its subcellular location is the endoplasmic reticulum membrane. Membrane bound hemoprotein which function as an electron carrier for several membrane bound oxygenases, including fatty acid desaturases. This Arabidopsis thaliana (Mouse-ear cress) protein is Cytochrome B5 isoform C.